A 565-amino-acid chain; its full sequence is Periplasmic trehalase (565 aa).

Positions 1-30 (MKSPAPSRPQKMALIPACIFLCFAALSVQA) are cleaved as a signal peptide. Substrate-binding positions include R152, 159–160 (WD), N196, 205–207 (RSQ), 277–279 (RPE), and G310. Residues D312 and E496 each act as proton donor/acceptor in the active site. E511 serves as a coordination point for substrate. Residues 538–565 (PCDNVPATRPTVKSATTQPSTKEAQPTP) are disordered. The segment covering 548–565 (TVKSATTQPSTKEAQPTP) has biased composition (polar residues).

The protein belongs to the glycosyl hydrolase 37 family. Monomer.

It localises to the periplasm. The enzyme catalyses alpha,alpha-trehalose + H2O = alpha-D-glucose + beta-D-glucose. Its function is as follows. Provides the cells with the ability to utilize trehalose at high osmolarity by splitting it into glucose molecules that can subsequently be taken up by the phosphotransferase-mediated uptake system. This chain is Periplasmic trehalase, found in Escherichia coli (strain 55989 / EAEC).